A 143-amino-acid chain; its full sequence is Large ribosomal subunit protein uL13 (143 aa).

The protein belongs to the universal ribosomal protein uL13 family. In terms of assembly, part of the 50S ribosomal subunit.

Its function is as follows. This protein is one of the early assembly proteins of the 50S ribosomal subunit, although it is not seen to bind rRNA by itself. It is important during the early stages of 50S assembly. In Prochlorococcus marinus (strain MIT 9301), this protein is Large ribosomal subunit protein uL13.